The following is a 155-amino-acid chain: Large ribosomal subunit protein eL24 (155 aa).

The disordered stretch occupies residues 87-155 (LELIKERRSQ…SFQKVKATSR (69 aa)). The segment covering 89 to 129 (LIKERRSQKPSDRKAARDSKLAKDKEAKKAAKAARKAEKAK) has biased composition (basic and acidic residues). Positions 130–143 (AVASGASVVSKQQA) are enriched in low complexity.

Belongs to the eukaryotic ribosomal protein eL24 family. Component of the large ribosomal subunit. Mature ribosomes consist of a small (40S) and a large (60S) subunit. The 40S subunit contains about 32 different proteins and 1 molecule of RNA (18S). The 60S subunit contains 45 different proteins and 3 molecules of RNA (25S, 5.8S and 5S).

The protein localises to the cytoplasm. Component of the ribosome, a large ribonucleoprotein complex responsible for the synthesis of proteins in the cell. The small ribosomal subunit (SSU) binds messenger RNAs (mRNAs) and translates the encoded message by selecting cognate aminoacyl-transfer RNA (tRNA) molecules. The large subunit (LSU) contains the ribosomal catalytic site termed the peptidyl transferase center (PTC), which catalyzes the formation of peptide bonds, thereby polymerizing the amino acids delivered by tRNAs into a polypeptide chain. The nascent polypeptides leave the ribosome through a tunnel in the LSU and interact with protein factors that function in enzymatic processing, targeting, and the membrane insertion of nascent chains at the exit of the ribosomal tunnel. The chain is Large ribosomal subunit protein eL24 from Candida albicans (strain SC5314 / ATCC MYA-2876) (Yeast).